Consider the following 903-residue polypeptide: Protein translocase subunit SecA (903 aa).

Residues Gln89, 107 to 111, and Asp502 contribute to the ATP site; that span reads GEGKT. Cys887, Cys889, Cys898, and His899 together coordinate Zn(2+).

Belongs to the SecA family. Monomer and homodimer. Part of the essential Sec protein translocation apparatus which comprises SecA, SecYEG and auxiliary proteins SecDF-YajC and YidC. It depends on Zn(2+) as a cofactor.

The protein localises to the cell inner membrane. The protein resides in the cytoplasm. The enzyme catalyses ATP + H2O + cellular proteinSide 1 = ADP + phosphate + cellular proteinSide 2.. Its function is as follows. Part of the Sec protein translocase complex. Interacts with the SecYEG preprotein conducting channel. Has a central role in coupling the hydrolysis of ATP to the transfer of proteins into and across the cell membrane, serving both as a receptor for the preprotein-SecB complex and as an ATP-driven molecular motor driving the stepwise translocation of polypeptide chains across the membrane. This chain is Protein translocase subunit SecA, found in Jannaschia sp. (strain CCS1).